Consider the following 231-residue polypeptide: 7-cyano-7-deazaguanine synthase (231 aa).

8–18 is a binding site for ATP; sequence FSGGQDSTTCL. Residues Cys-187, Cys-196, Cys-199, and Cys-202 each coordinate Zn(2+).

Belongs to the QueC family. Requires Zn(2+) as cofactor.

The enzyme catalyses 7-carboxy-7-deazaguanine + NH4(+) + ATP = 7-cyano-7-deazaguanine + ADP + phosphate + H2O + H(+). It functions in the pathway purine metabolism; 7-cyano-7-deazaguanine biosynthesis. Catalyzes the ATP-dependent conversion of 7-carboxy-7-deazaguanine (CDG) to 7-cyano-7-deazaguanine (preQ(0)). This chain is 7-cyano-7-deazaguanine synthase, found in Vibrio cholerae serotype O1 (strain ATCC 39541 / Classical Ogawa 395 / O395).